A 372-amino-acid chain; its full sequence is DNA replication and repair protein RecF (372 aa).

30-37 (GENAQGKT) is an ATP binding site.

This sequence belongs to the RecF family.

It localises to the cytoplasm. The RecF protein is involved in DNA metabolism; it is required for DNA replication and normal SOS inducibility. RecF binds preferentially to single-stranded, linear DNA. It also seems to bind ATP. The protein is DNA replication and repair protein RecF of Geobacillus kaustophilus (strain HTA426).